Consider the following 468-residue polypeptide: O-methyltransferase lcsG (468 aa).

Residues 1 to 12 (MGDNVQSDTTAA) show a composition bias toward polar residues. Residues 1 to 29 (MGDNVQSDTTAAQAGITDAPTAPTSAPVS) form a disordered region. S-adenosyl-L-methionine contacts are provided by residues 298–299 (GG), aspartate 321, 348–349 (DF), and lysine 363.

Belongs to the class I-like SAM-binding methyltransferase superfamily. Cation-independent O-methyltransferase family.

Its pathway is secondary metabolite biosynthesis. In terms of biological role, O-methyltransferase; part of the gene cluster that mediates the biosynthesis of the lipopeptide antibiotics leucinostatins that show extensive biological activities, including antimalarial, antiviral, antibacterial, antifungal, and antitumor activities, as well as phytotoxic. Leucinostatin A contains nine amino acid residues, including the unusual amino acid 4-methyl-L-proline (MePro), 2-amino-6-hydroxy-4-methyl-8-oxodecanoic acid (AHyMeOA), 3-hydroxyleucine (HyLeu), alpha-aminoisobutyric acid (AIB), beta-Ala, a 4-methylhex-2-enoic acid at the N-terminus as well as a N1,N1-dimethylpropane-1,2-diamine (DPD) at the C-terminus. The biosynthesis of leucinostatins is probably initiated with the assembly of 4-methylhex-2-enoic acid by a reducing PKS. Two reducing polyketide synthases, lcsB and lcsC, have been identified in the cluster and it is not clear which is the one that assembles 4-methylhex-2-enoic acid since both contain KS, AT, DH, cMT, ER, KR and ACP domains. The polyketide residue might be transferred to the NRPS lcsA, mediated by two additional enzymes, the acyl-CoA ligase lcsD and the thioesterase lcsE. The linear polyketide carboxylic acid, which is released from PKS, is converted to a CoA thioester by lcsD, and then lcsE hydrolyzes the thiol bond and shuttles the polyketide intermediate to lcsA. The C domain of the first module catalyzed the condensation of 4-methylhex-2-enoic acid and MePro carried by domain A1, followed by successive condensations of nine amino acids to trigger the elongation of the linear peptide. A5 and A6 domains of lcsA are proposed to incorporate leucine, A2 AHyMeOA, and A3 incorporates HyLeu. A4, A7 and A8 incorporate AIB. The AHyMeOA in leucinostatin A activated by the A2 might be produced by the second PKS (lcsB or lcsC) present within the cluster. The MePro is probably produced via leucine cyclization and may originate from a separate pathway, independent of the cluster. Another nonproteinogenic amino acid, beta-Ala, could be produced by an aspartic acid decarboxylase also localized outside of the cluster. Two candidates are VFPBJ_01400 and VFPBJ_10476. The final peptide scaffold may be released by the NAD(P)H-dependent thioester reductase (TE) at the C-terminal region of lcsA. Transamination of the lcsA product by the transaminase lcsP may produce DPD at the C-terminus. Further hydroxylation steps performed alternatively by the cytochrome P450 monooxygenases lcsI, lcsK and lcsN then yield the non-methylated leucinostatins precursor. It is also possible that leucines can be hydroxylated prior to their incorporation into the peptide. Varying extents of methylation then lead to the formation of leucinostatins A and B. This is O-methyltransferase lcsG from Purpureocillium lilacinum (Paecilomyces lilacinus).